Here is a 201-residue protein sequence, read N- to C-terminus: LexA repressor (201 aa).

A DNA-binding region (H-T-H motif) is located at residues 28 to 48 (RAEIAARLGFRSPNAAEEHLK). Residues Ser118 and Lys155 each act as for autocatalytic cleavage activity in the active site.

This sequence belongs to the peptidase S24 family. As to quaternary structure, homodimer.

It carries out the reaction Hydrolysis of Ala-|-Gly bond in repressor LexA.. Functionally, represses a number of genes involved in the response to DNA damage (SOS response), including recA and lexA. In the presence of single-stranded DNA, RecA interacts with LexA causing an autocatalytic cleavage which disrupts the DNA-binding part of LexA, leading to derepression of the SOS regulon and eventually DNA repair. This chain is LexA repressor, found in Photorhabdus laumondii subsp. laumondii (strain DSM 15139 / CIP 105565 / TT01) (Photorhabdus luminescens subsp. laumondii).